Here is a 70-residue protein sequence, read N- to C-terminus: Large ribosomal subunit protein bL31 (70 aa).

Positions 16, 18, 37, and 40 each coordinate Zn(2+).

Belongs to the bacterial ribosomal protein bL31 family. Type A subfamily. As to quaternary structure, part of the 50S ribosomal subunit. Zn(2+) is required as a cofactor.

Functionally, binds the 23S rRNA. The protein is Large ribosomal subunit protein bL31 of Shewanella denitrificans (strain OS217 / ATCC BAA-1090 / DSM 15013).